A 962-amino-acid polypeptide reads, in one-letter code: MFSSFSFLNMFGVLFTVFNLTVVQPYPSHIIIKSFGNNEEVSRVALKAMEYTSDHINSRDDVPFKLAFDHRVVEEGAAVSWNMVNAVCDELKEGAMALLSSVDGKGREGIRGVSDALEMPLVSLTALSNDDHQQQQFGNLFEVSVRPPISELLADFIVHKGWGEVLVLIDPVHASLHLPSLWRHLRTRTNTSVKASMFDLPADEKQFEAYLMQFNMMRNNETNRILIDCASPKRLKKLLINIRSAQFNQANYHYVLANYDFLPYDQEMFQNGNINISGFNIINKDGREYWSLKKHLKTSSSLGGGDDVSVEAAVGHDAMLVTWHGFAKCLQANDSLFHGTFRHRRFFNRGFPGIYCDPLSDRSHPNRPFSSFEHGKTIGVAFRNMKIGHKEGTLTGNIEFDRFGNRKNFDVSIVDLVSNTKATFNSKEVLAWRQGVGFFSNRTVAQHSRKSQNDHKDNQVIVLTNLVAPFVMIKRECLEMANLTECQGNNKFEGFCIDLLKLLADKIEEFNYEIKLGTKAGSKQADGSWDGMIGELLSGRAHAVVASLTINQERERVVDFSKPFMTTGISIMIKKPDKQEFSVFSFMQPLSTEIWMYIIFAYIGVSVVIFLVSRFSPYEWRVEETSRGGFTISNDFSVYNCLWFTLAAFMQQGTDILPRSISGRIASSAWWFFTMIIVSSYTANLAAFLTLEKMQAPIESVEDLAKQSKIKYGIQGGGSTASFFKYSSVQIYQRMWRYMESQVPPVFVASYAEGIERVRSHKGRYAFLLEATANEYENTRKPCDTMKVGANLNSIGYGIATPFGSDWKDHINLAILALQERGELKKLENKWWYDRGQCDAGITVDGSSASLNLSKVAGIFYILMGGMVISMLAALGEFLYRSRIEARKSNSNSMVANFAKNLKSALSSQLRLSVEGGAVAQPGSQSHNAIRRQQVAAFLPANEKEAFNNVDRPANTLYNTAV.

An N-terminal signal peptide occupies residues 1–25 (MFSSFSFLNMFGVLFTVFNLTVVQP). Residues 26 to 591 (YPSHIIIKSF…SVFSFMQPLS (566 aa)) lie on the Extracellular side of the membrane. N190, N220, N275, N333, N441, and N482 each carry an N-linked (GlcNAc...) asparagine glycan. Residues 592-612 (TEIWMYIIFAYIGVSVVIFLV) traverse the membrane as a helical segment. At 613–668 (SRFSPYEWRVEETSRGGFTISNDFSVYNCLWFTLAAFMQQGTDILPRSISGRIASS) the chain is on the cytoplasmic side. Residues 669 to 689 (AWWFFTMIIVSSYTANLAAFL) traverse the membrane as a helical segment. The Extracellular portion of the chain corresponds to 690-855 (TLEKMQAPIE…GSSASLNLSK (166 aa)). Residue N852 is glycosylated (N-linked (GlcNAc...) asparagine). Residues 856–876 (VAGIFYILMGGMVISMLAALG) traverse the membrane as a helical segment. At 877-962 (EFLYRSRIEA…PANTLYNTAV (86 aa)) the chain is on the cytoplasmic side.

The protein belongs to the glutamate-gated ion channel (TC 1.A.10.1) family. In terms of assembly, interacts with sol-1. Interacts with cni-1; the interaction negatively regulates export of glr-1 from the endoplasmic reticulum to synapses. Interacts with usp-46; the interaction results in deubiquitination of glr-1. Post-translationally, ubiquitinated. Deubiquitinated by usp-46 which prevents its degradation. In terms of processing, glycosylated. In terms of tissue distribution, command interneurons of the locomotory control circuit (AIB, AVA, AVB, AVD, AVE and PVC) and motor neurons (RMD, RIM, SMD, AVG, PVQ and URY).

The protein resides in the postsynaptic cell membrane. The protein localises to the endoplasmic reticulum. Its subcellular location is the synapse. It localises to the cell membrane. It is found in the recycling endosome. The protein resides in the cell projection. The protein localises to the dendrite. Its subcellular location is the perikaryon. Its function is as follows. Non-NMDA (N-methyl-D-aspartate) ionotropic glutamate receptor. L-glutamate acts as an excitatory neurotransmitter at many synapses in the central nervous system. The postsynaptic actions of glutamate are mediated by a variety of receptors that are named according to their selective agonists. May contribute to a sensory discrimination between mechanical and chemical stimuli. Plays a role in controlling movement in response to environmental cues such as food availability and mechanosensory stimulation such as the nose touch response. In AIB interneurons, promotes omega turns, a movement that frequently follows backwards locomotion or 'reversals' in response to environmental cues while possibly playing an inhibitory role in alternative neurons to inhibit omega turns. The protein is Glutamate receptor 1 of Caenorhabditis elegans.